The sequence spans 259 residues: NAP1-related protein 1 (259 aa).

The segment covering 1-15 has biased composition (basic and acidic residues); it reads MAAAEQKGKKPRTDG. The tract at residues 1–20 is disordered; sequence MAAAEQKGKKPRTDGAEAEP. Residues 21–62 adopt a coiled-coil conformation; that stretch reads VDAALLQSIEKLQEIQDEIEKVNEEACDKVLELEQKYNEVRR. Residues 228–259 form a disordered region; the sequence is ELLDDDDEVSDDDDEEEDDEDQGEGEEDGEEN.

It belongs to the nucleosome assembly protein (NAP) family.

Its subcellular location is the nucleus. It localises to the cytoplasm. Functionally, acts as a histone H2A/H2B chaperone in nucleosome assembly. The sequence is that of NAP1-related protein 1 from Oryza sativa subsp. indica (Rice).